Reading from the N-terminus, the 501-residue chain is Proline--tRNA ligase (501 aa).

It belongs to the class-II aminoacyl-tRNA synthetase family.

The catalysed reaction is tRNA(Pro) + L-proline + ATP = L-prolyl-tRNA(Pro) + AMP + diphosphate. This is Proline--tRNA ligase from Encephalitozoon cuniculi (strain GB-M1) (Microsporidian parasite).